The chain runs to 433 residues: GTPase Der (433 aa).

EngA-type G domains are found at residues 3-167 and 175-349; these read KIVS…DKNI and PRIA…FNLR. Residues 9–16, 56–60, 119–122, 181–188, 228–232, and 293–296 each bind GTP; these read GRPNVGKS, DTGGY, NKID, DTAGI, and NKWD. Residues 350–433 enclose the KH-like domain; sequence LRIKTSLLNK…IPIKILFRLK (84 aa).

It belongs to the TRAFAC class TrmE-Era-EngA-EngB-Septin-like GTPase superfamily. EngA (Der) GTPase family. Associates with the 50S ribosomal subunit.

Its function is as follows. GTPase that plays an essential role in the late steps of ribosome biogenesis. In Karelsulcia muelleri (strain GWSS) (Sulcia muelleri), this protein is GTPase Der.